Here is a 507-residue protein sequence, read N- to C-terminus: Tabersonine/lochnericine 19-hydroxylase (507 aa).

Residues 8-28 form a helical membrane-spanning segment; that stretch reads FFVLLLPFFIGIAFIYKLWNF. An N-linked (GlcNAc...) asparagine glycan is attached at Asn167. Cys447 serves as a coordination point for heme.

This sequence belongs to the cytochrome P450 family. Requires heme as cofactor. Confined to roots.

The protein localises to the endoplasmic reticulum membrane. It carries out the reaction (-)-tabersonine + reduced [NADPH--hemoprotein reductase] + O2 = (-)-(R)-19-hydroxytabersonine + oxidized [NADPH--hemoprotein reductase] + H2O + H(+). The enzyme catalyses lochnericine + reduced [NADPH--hemoprotein reductase] + O2 = horhammericine + oxidized [NADPH--hemoprotein reductase] + H2O + H(+). It catalyses the reaction (-)-vincadifformine + reduced [NADPH--hemoprotein reductase] + O2 = (-)-minovincinine + oxidized [NADPH--hemoprotein reductase] + H2O + H(+). It participates in alkaloid biosynthesis. Its function is as follows. Component of the monoterpenoid indole alkaloids (MIAs, e.g. echitovenine, tabersonine, lochnericine, 19-hydroxytabersonine and horhammericine) biosynthetic pathway; MIAs are used in cancer treatment and other medical applications. Cytochrome P450 catalyzing the conversion of (-)-tabersonine to 19-hydroxytabersonine, of lochnericine to horhammericine and of (-)-vincadifformine to (-)-minovincinine. The polypeptide is Tabersonine/lochnericine 19-hydroxylase (Catharanthus roseus (Madagascar periwinkle)).